A 446-amino-acid chain; its full sequence is MSAPAVSQGRNVVVIGTQWGDEGKGKIVDWLTDHAQGVVRFQGGHNAGHTLIIGGKKTILRLIPSGIMRDGVACYIGNGVVLSPEALFKEIDELESAGVEVKSRLRISEATTLILPYHIAIDKAREIKRGAAKIGTTGRGIGPAYEDKVARRALRVQDLFDPAYFAERLRENLDFHNFVLTQYLNHPALDFQQTLDEMLPYGERLAPMVTDVSAELFAANAAGKNLMFEGAQGTLLDIDHGTYPFVTSSNCVAGNAAAGAGVGPGQLHYILGITKAYCTRVGSGPFPSELYDADNPARQDPTGVRLANVGKEFGSVTGRPRRTGWLDAAALRRAIQINGVSGLCMTKLDVLDGLETIKLCVGYMLDGKSIDILPRGSDAVARCQPVYEEFPGWNTSTFGLKEWDALPETAQAYLKRVEEVAGIPIAMISTGPDRDETILLRHPYKD.

Residues 20-26 and 48-50 contribute to the GTP site; these read GDEGKGK and GHT. The active-site Proton acceptor is the Asp21. Residues Asp21 and Gly48 each coordinate Mg(2+). IMP contacts are provided by residues 21 to 24, 46 to 49, Thr137, Arg151, Gln232, Thr247, and Arg319; these read DEGK and NAGH. Residue His49 is the Proton donor of the active site. 315–321 lines the substrate pocket; sequence SVTGRPR. GTP contacts are provided by residues Arg321, 347 to 349, and 429 to 431; these read KLD and STG.

Belongs to the adenylosuccinate synthetase family. Homodimer. Requires Mg(2+) as cofactor.

It is found in the cytoplasm. It carries out the reaction IMP + L-aspartate + GTP = N(6)-(1,2-dicarboxyethyl)-AMP + GDP + phosphate + 2 H(+). Its pathway is purine metabolism; AMP biosynthesis via de novo pathway; AMP from IMP: step 1/2. In terms of biological role, plays an important role in the de novo pathway of purine nucleotide biosynthesis. Catalyzes the first committed step in the biosynthesis of AMP from IMP. The protein is Adenylosuccinate synthetase of Ralstonia nicotianae (strain ATCC BAA-1114 / GMI1000) (Ralstonia solanacearum).